A 361-amino-acid chain; its full sequence is Peptide chain release factor 1 (361 aa).

Glutamine 236 is subject to N5-methylglutamine.

The protein belongs to the prokaryotic/mitochondrial release factor family. In terms of processing, methylated by PrmC. Methylation increases the termination efficiency of RF1.

The protein localises to the cytoplasm. Its function is as follows. Peptide chain release factor 1 directs the termination of translation in response to the peptide chain termination codons UAG and UAA. This is Peptide chain release factor 1 from Lactobacillus delbrueckii subsp. bulgaricus (strain ATCC BAA-365 / Lb-18).